The following is a 100-amino-acid chain: Flagellar transcriptional regulator FlhD (100 aa).

Belongs to the FlhD family. As to quaternary structure, homodimer; disulfide-linked. Forms a heterohexamer composed of two FlhC and four FlhD subunits. Each FlhC binds a FlhD dimer, forming a heterotrimer, and a hexamer assembles by dimerization of two heterotrimers.

It localises to the cytoplasm. Functionally, functions in complex with FlhC as a master transcriptional regulator that regulates transcription of several flagellar and non-flagellar operons by binding to their promoter region. Activates expression of class 2 flagellar genes, including fliA, which is a flagellum-specific sigma factor that turns on the class 3 genes. Also regulates genes whose products function in a variety of physiological pathways. This is Flagellar transcriptional regulator FlhD from Ralstonia pickettii (strain 12D).